The sequence spans 366 residues: Galactose-1-phosphate uridylyltransferase (366 aa).

Ser27 bears the Phosphoserine mark. Zn(2+) is bound by residues Cys54 and Cys57. UDP-alpha-D-glucose-binding positions include Ala63 and Asn79 to Asp80. Zn(2+) is bound at residue His124. Asn169 provides a ligand contact to UDP-alpha-D-glucose. A Zn(2+)-binding site is contributed by His180. His182 serves as the catalytic Tele-UMP-histidine intermediate. Gln184 contributes to the UDP-alpha-D-glucose binding site. Fe cation is bound by residues Glu198, His297, His314, and His316. UDP-alpha-D-glucose is bound by residues Lys329–Val332 and Phe334–Glu335.

The protein belongs to the galactose-1-phosphate uridylyltransferase type 1 family. In terms of assembly, homodimer. Zn(2+) is required as a cofactor.

The catalysed reaction is alpha-D-galactose 1-phosphate + UDP-alpha-D-glucose = alpha-D-glucose 1-phosphate + UDP-alpha-D-galactose. Its pathway is carbohydrate metabolism; galactose metabolism. The protein is Galactose-1-phosphate uridylyltransferase (GAL7) of Saccharomyces cerevisiae (strain ATCC 204508 / S288c) (Baker's yeast).